Here is a 223-residue protein sequence, read N- to C-terminus: Ribonuclease T (223 aa).

The Exonuclease domain maps to 20–194; it reads VVIDVETAGF…YDTNQTALLF (175 aa). Mg(2+) contacts are provided by Asp-23, Glu-25, His-181, and Asp-186. The active-site Proton donor/acceptor is the His-181.

The protein belongs to the RNase T family. Homodimer. Mg(2+) serves as cofactor.

Its function is as follows. Trims short 3' overhangs of a variety of RNA species, leaving a one or two nucleotide 3' overhang. Responsible for the end-turnover of tRNA: specifically removes the terminal AMP residue from uncharged tRNA (tRNA-C-C-A). Also appears to be involved in tRNA biosynthesis. The polypeptide is Ribonuclease T (Pectobacterium atrosepticum (strain SCRI 1043 / ATCC BAA-672) (Erwinia carotovora subsp. atroseptica)).